The sequence spans 28 residues: Aspartate aminotransferase, mitochondrial (28 aa).

The protein belongs to the class-I pyridoxal-phosphate-dependent aminotransferase family. In terms of assembly, homodimer. Pyridoxal 5'-phosphate serves as cofactor.

The protein resides in the mitochondrion matrix. The catalysed reaction is L-aspartate + 2-oxoglutarate = oxaloacetate + L-glutamate. Plays a key role in amino acid metabolism. Important for metabolite exchange between mitochondria and cytosol. In Catharanthus roseus (Madagascar periwinkle), this protein is Aspartate aminotransferase, mitochondrial.